The primary structure comprises 263 residues: NADH dehydrogenase [ubiquinone] iron-sulfur protein 3, mitochondrial (263 aa).

A mitochondrion-targeting transit peptide spans 1-35 (MVAAVARLWWRGLLGASALTRGAGRPSVLLLPVRR).

This sequence belongs to the complex I 30 kDa subunit family. In terms of assembly, core subunit of respiratory chain NADH dehydrogenase (Complex I) which is composed of 45 different subunits. Interacts with NDUFAF3. Interacts with RAB5IF. Found in subcomplexes containing subunits NDUFS2, MT-ND1 and NDUFA13.

It is found in the mitochondrion inner membrane. The catalysed reaction is a ubiquinone + NADH + 5 H(+)(in) = a ubiquinol + NAD(+) + 4 H(+)(out). In terms of biological role, core subunit of the mitochondrial membrane respiratory chain NADH dehydrogenase (Complex I) which catalyzes electron transfer from NADH through the respiratory chain, using ubiquinone as an electron acceptor. Essential for the catalytic activity and assembly of complex I. The polypeptide is NADH dehydrogenase [ubiquinone] iron-sulfur protein 3, mitochondrial (NDUFS3) (Pongo pygmaeus (Bornean orangutan)).